We begin with the raw amino-acid sequence, 256 residues long: Ubiquinone/menaquinone biosynthesis C-methyltransferase UbiE (256 aa).

The span at 1–12 (MNDQRKGDHAEP) shows a compositional bias: basic and acidic residues. Positions 1–23 (MNDQRKGDHAEPTTHFGYQDVPE) are disordered. S-adenosyl-L-methionine is bound by residues T79, D100, and 128–129 (DA).

Belongs to the class I-like SAM-binding methyltransferase superfamily. MenG/UbiE family.

The catalysed reaction is a 2-demethylmenaquinol + S-adenosyl-L-methionine = a menaquinol + S-adenosyl-L-homocysteine + H(+). The enzyme catalyses a 2-methoxy-6-(all-trans-polyprenyl)benzene-1,4-diol + S-adenosyl-L-methionine = a 5-methoxy-2-methyl-3-(all-trans-polyprenyl)benzene-1,4-diol + S-adenosyl-L-homocysteine + H(+). Its pathway is quinol/quinone metabolism; menaquinone biosynthesis; menaquinol from 1,4-dihydroxy-2-naphthoate: step 2/2. It functions in the pathway cofactor biosynthesis; ubiquinone biosynthesis. Functionally, methyltransferase required for the conversion of demethylmenaquinol (DMKH2) to menaquinol (MKH2) and the conversion of 2-polyprenyl-6-methoxy-1,4-benzoquinol (DDMQH2) to 2-polyprenyl-3-methyl-6-methoxy-1,4-benzoquinol (DMQH2). In Pseudomonas putida (strain ATCC 700007 / DSM 6899 / JCM 31910 / BCRC 17059 / LMG 24140 / F1), this protein is Ubiquinone/menaquinone biosynthesis C-methyltransferase UbiE.